Consider the following 321-residue polypeptide: uncharacterized protein (321 aa).

This is an uncharacterized protein from Sinorhizobium fredii (strain NBRC 101917 / NGR234).